The primary structure comprises 396 residues: Phosphoglycerate kinase (396 aa).

Substrate contacts are provided by residues 21–23 (DFN), arginine 36, 59–62 (HLGK), arginine 119, and arginine 156. ATP-binding positions include lysine 206, glycine 294, glutamate 325, and 352 to 355 (GGDS).

The protein belongs to the phosphoglycerate kinase family. As to quaternary structure, monomer.

The protein resides in the cytoplasm. It carries out the reaction (2R)-3-phosphoglycerate + ATP = (2R)-3-phospho-glyceroyl phosphate + ADP. Its pathway is carbohydrate degradation; glycolysis; pyruvate from D-glyceraldehyde 3-phosphate: step 2/5. The polypeptide is Phosphoglycerate kinase (Listeria monocytogenes serotype 4a (strain HCC23)).